Consider the following 554-residue polypeptide: 3-(3-hydroxy-phenyl)propionate/3-hydroxycinnamic acid hydroxylase (554 aa).

FAD is bound by residues 17 to 46 (QVAIVGAGPVGLMMANYLGQMGISVLVVEK) and 285 to 295 (FRINRVLLAGD).

The protein belongs to the PheA/TfdB FAD monooxygenase family. Requires FAD as cofactor.

It catalyses the reaction 3-(3-hydroxyphenyl)propanoate + NADH + O2 + H(+) = 3-(2,3-dihydroxyphenyl)propanoate + NAD(+) + H2O. The catalysed reaction is (2E)-3-(3-hydroxyphenyl)prop-2-enoate + NADH + O2 + H(+) = (2E)-3-(2,3-dihydroxyphenyl)prop-2-enoate + NAD(+) + H2O. Its pathway is aromatic compound metabolism; 3-phenylpropanoate degradation. In terms of biological role, catalyzes the insertion of one atom of molecular oxygen into position 2 of the phenyl ring of 3-(3-hydroxyphenyl)propionate (3-HPP) and hydroxycinnamic acid (3HCI). The sequence is that of 3-(3-hydroxy-phenyl)propionate/3-hydroxycinnamic acid hydroxylase from Klebsiella pneumoniae subsp. pneumoniae (strain ATCC 700721 / MGH 78578).